Consider the following 158-residue polypeptide: Placenta growth factor (158 aa).

The first 18 residues, 1–18 (MLVMKLFTCFLQVLAGLA), serve as a signal peptide directing secretion. N-linked (GlcNAc...) asparagine glycans are attached at residues Asn29 and Asn30. 3 cysteine pairs are disulfide-bonded: Cys48/Cys90, Cys79/Cys125, and Cys83/Cys127. The N-linked (GlcNAc...) asparagine glycan is linked to Asn97. The interval 136 to 158 (AERRKTKGKRKRSRNSQTEEPHP) is disordered. A compositionally biased stretch (basic residues) spans 137–149 (ERRKTKGKRKRSR).

It belongs to the PDGF/VEGF growth factor family. In terms of assembly, antiparallel homodimer; disulfide-linked. Also found as heterodimer with VEGFA/VEGF.

The protein localises to the secreted. In terms of biological role, growth factor active in angiogenesis and endothelial cell growth, stimulating their proliferation and migration. It binds to the receptor FLT1/VEGFR-1. Also promotes cell tumor growth. The sequence is that of Placenta growth factor (Pgf) from Mus musculus (Mouse).